A 64-amino-acid polypeptide reads, in one-letter code: Conotoxin Pu5.2 (64 aa).

Positions 1-22 are cleaved as a signal peptide; the sequence is MRCVPVFVILLLLIASTPSVDA. Residues 23–52 constitute a propeptide that is removed on maturation; the sequence is RPNPKDDVPLASFHGADNANRILRTLWNLR. Ile63 carries the isoleucine amide modification.

It belongs to the conotoxin T superfamily. Contains 2 disulfide bonds that can be either 'C1-C3, C2-C4' or 'C1-C4, C2-C3', since these disulfide connectivities have been observed for conotoxins with cysteine framework V (for examples, see AC P0DQQ7 and AC P81755). Expressed by the venom duct.

It localises to the secreted. The protein is Conotoxin Pu5.2 of Conus pulicarius (Flea-bitten cone).